Consider the following 376-residue polypeptide: Transcription initiation factor IIA subunit 1 (376 aa).

Residue Ala2 is modified to N-acetylalanine. Composition is skewed to low complexity over residues 69–79 (QVQQQHQPQQQ) and 89–105 (QAQP…TQQV). Disordered regions lie at residues 69-107 (QVQQ…QVLI), 247-266 (QAQI…AQTQ), and 274-329 (DGTG…QELF). Ser280, Ser281, Ser316, and Ser321 each carry phosphoserine; by TAF1. A compositionally biased stretch (acidic residues) spans 280-329 (SSEEDEDEEEDYDDDEEEDKEKDGAEDGQVEEEPLNSEDDVSDEEGQELF). DNA is bound by residues His343 and Arg344.

Belongs to the TFIIA subunit 1 family. In terms of assembly, TFIIA is a heterodimer of the large unprocessed subunit 1 and a small subunit gamma. It was originally believed to be a heterotrimer of an alpha (p35), a beta (p19) and a gamma subunit (p12). TFIIA forms a complex with TBP. Part of TBP-based Pol II pre-initiation complex (PIC), in which Pol II core assembles with general transcription factors and other specific initiation factors including GTF2E1, GTF2E2, GTF2F1, GTF2F2, TCEA1, ERCC2, ERCC3, GTF2H2, GTF2H3, GTF2H4, GTF2H5, GTF2A1, GTF2A2, GTF2B and TBP; this large multi-subunit PIC complex mediates DNA unwinding and targets Pol II core to the transcription start site where the first phosphodiester bond forms. In terms of processing, the alpha and beta subunits are postranslationally produced from the precursor form by TASP1. The cleavage promotes proteasomal degradation.

The protein resides in the nucleus. Functionally, TFIIA is a component of the transcription machinery of RNA polymerase II and plays an important role in transcriptional activation. TFIIA in a complex with TBP mediates transcriptional activity. This is Transcription initiation factor IIA subunit 1 (GTF2A1) from Homo sapiens (Human).